Reading from the N-terminus, the 72-residue chain is ATP-dependent Clp protease ATP-binding subunit ClpA homolog (72 aa).

The protein belongs to the ClpA/ClpB family.

It is found in the plastid. Its subcellular location is the chloroplast. In terms of biological role, may interact with a ClpP-like protease involved in degradation of denatured proteins in the chloroplast. The chain is ATP-dependent Clp protease ATP-binding subunit ClpA homolog from Populus euphratica (Euphrates poplar).